The following is a 970-amino-acid chain: Rho GTPase-activating protein gacK (970 aa).

A signal peptide spans 1–20; sequence MTLVYEKSSFVLIMAQIAEA. Disordered regions lie at residues 30–49, 258–285, 312–446, 487–550, and 860–886; these read SNDL…SAAI, STCS…INQN, EITI…FSPT, STSN…NNNN, and TASS…NDDP. Composition is skewed to low complexity over residues 35–49 and 258–269; these read STSA…SAAI and STCSLSSNASNN. Residues 321–333 show a composition bias toward pro residues; it reads IPLPPQSSSPPPT. Residues 334–383 are compositionally biased toward low complexity; sequence RNNQSSPSPSSPQQQNIMPTPPSTSLTPPQSPTLSPSSSTHSTPTQTTTT. Over residues 392–406 the composition is skewed to polar residues; sequence PSTISQNNARKTQIP. A compositionally biased stretch (low complexity) spans 407–426; the sequence is TTTTTTTTTTTTTSTTSTTS. Residues 427–446 show a composition bias toward polar residues; the sequence is PNPVVNNKNLNTPSSSFSPT. The region spanning 754–970 is the Rho-GAP domain; the sequence is IEDSELVEDN…LELIQFNKSL (217 aa). Low complexity predominate over residues 860–885; it reads TASSAATANSSSSGSGNGNSSPNNDD.

It is found in the cytoplasm. Its function is as follows. Rho GTPase-activating protein involved in the signal transduction pathway. This chain is Rho GTPase-activating protein gacK (gacK), found in Dictyostelium discoideum (Social amoeba).